We begin with the raw amino-acid sequence, 232 residues long: 2-C-methyl-D-erythritol 4-phosphate cytidylyltransferase (232 aa).

It belongs to the IspD/TarI cytidylyltransferase family. IspD subfamily.

The enzyme catalyses 2-C-methyl-D-erythritol 4-phosphate + CTP + H(+) = 4-CDP-2-C-methyl-D-erythritol + diphosphate. Its pathway is isoprenoid biosynthesis; isopentenyl diphosphate biosynthesis via DXP pathway; isopentenyl diphosphate from 1-deoxy-D-xylulose 5-phosphate: step 2/6. In terms of biological role, catalyzes the formation of 4-diphosphocytidyl-2-C-methyl-D-erythritol from CTP and 2-C-methyl-D-erythritol 4-phosphate (MEP). This Bacillus velezensis (strain DSM 23117 / BGSC 10A6 / LMG 26770 / FZB42) (Bacillus amyloliquefaciens subsp. plantarum) protein is 2-C-methyl-D-erythritol 4-phosphate cytidylyltransferase.